A 226-amino-acid polypeptide reads, in one-letter code: Ribonuclease 3 (226 aa).

In terms of domain architecture, RNase III spans 6–128; that stretch reads INRLQRKLGY…LIGGVFLDSD (123 aa). Position 41 (Glu41) interacts with Mg(2+). Asp45 is a catalytic residue. Mg(2+) is bound by residues Asp114 and Glu117. The active site involves Glu117. A DRBM domain is found at 155 to 225; that stretch reads DPKTRLQEYL…AEQALKQLEL (71 aa).

Belongs to the ribonuclease III family. As to quaternary structure, homodimer. Requires Mg(2+) as cofactor.

It localises to the cytoplasm. The catalysed reaction is Endonucleolytic cleavage to 5'-phosphomonoester.. Its function is as follows. Digests double-stranded RNA. Involved in the processing of primary rRNA transcript to yield the immediate precursors to the large and small rRNAs (23S and 16S). Processes some mRNAs, and tRNAs when they are encoded in the rRNA operon. Processes pre-crRNA and tracrRNA of type II CRISPR loci if present in the organism. In Yersinia pseudotuberculosis serotype O:1b (strain IP 31758), this protein is Ribonuclease 3.